The primary structure comprises 294 residues: 33 kDa chaperonin (294 aa).

2 cysteine pairs are disulfide-bonded: C230–C232 and C263–C266.

The protein belongs to the HSP33 family. Post-translationally, under oxidizing conditions two disulfide bonds are formed involving the reactive cysteines. Under reducing conditions zinc is bound to the reactive cysteines and the protein is inactive.

Its subcellular location is the cytoplasm. Its function is as follows. Redox regulated molecular chaperone. Protects both thermally unfolding and oxidatively damaged proteins from irreversible aggregation. Plays an important role in the bacterial defense system toward oxidative stress. The chain is 33 kDa chaperonin from Chromobacterium violaceum (strain ATCC 12472 / DSM 30191 / JCM 1249 / CCUG 213 / NBRC 12614 / NCIMB 9131 / NCTC 9757 / MK).